The sequence spans 1025 residues: Multidrug resistance protein MdtC (1025 aa).

12 helical membrane-spanning segments follow: residues 15–35 (ILIS…LPVA), 333–353 (EVEQ…FLFL), 360–380 (LIPA…MYLC), 387–407 (LSLM…IVVL), 431–451 (VGFT…PLLL), 469–489 (VAIG…CGWL), 528–548 (LTGL…ISIP), 851–871 (AQVI…GMLY), 875–895 (VHPL…LLAL), 897–917 (IFDA…IGIV), 953–973 (PIMM…LSGG), and 984–1004 (ITIV…TPVV).

It belongs to the resistance-nodulation-cell division (RND) (TC 2.A.6) family. MdtC subfamily. As to quaternary structure, part of a tripartite efflux system composed of MdtA, MdtB and MdtC. MdtC forms a heteromultimer with MdtB.

Its subcellular location is the cell inner membrane. The protein is Multidrug resistance protein MdtC of Klebsiella pneumoniae (strain 342).